An 884-amino-acid polypeptide reads, in one-letter code: Probable disease resistance protein At1g12290 (884 aa).

The stretch at 26–66 (LYYIQNIKENLTSLEEAMEDLKALRDDLLRKVQTAEEGGLQ) forms a coiled coil. One can recognise an NB-ARC domain in the interval 139–443 (AHPATRAVGE…CEGFIDGDEN (305 aa)). 182-189 (GMGGVGKT) contributes to the ATP binding site. 6 LRR repeats span residues 519 to 540 (VVSRMSLVNNRIKEIHGSPECP), 541 to 563 (KLTTLFLQDNRHLVNISGEFFRS), 566 to 588 (RLVVLDLSWNVNLSGLPDQISEL), 590 to 612 (SLRYLDLSYSSIGRLPVGLLKLK), 613 to 635 (KLMHLNLESMLCLESVSGIDHLS), and 644 to 664 (NLRMWLTISLLEELERLENLE).

It belongs to the disease resistance NB-LRR family.

Functionally, probable disease resistance protein. The chain is Probable disease resistance protein At1g12290 from Arabidopsis thaliana (Mouse-ear cress).